The following is a 142-amino-acid chain: Transcription antitermination protein NusB (142 aa).

This sequence belongs to the NusB family.

Its function is as follows. Involved in transcription antitermination. Required for transcription of ribosomal RNA (rRNA) genes. Binds specifically to the boxA antiterminator sequence of the ribosomal RNA (rrn) operons. The chain is Transcription antitermination protein NusB from Latilactobacillus sakei subsp. sakei (strain 23K) (Lactobacillus sakei subsp. sakei).